Here is a 490-residue protein sequence, read N- to C-terminus: Endoglucanase 13 (490 aa).

The signal sequence occupies residues 1 to 26 (MSQLKNGSSQCLWTSICIVLIVMSMA). N-linked (GlcNAc...) asparagine glycosylation is present at N6. D86 acts as the Nucleophile in catalysis. Active-site residues include H412, D464, and E473.

It belongs to the glycosyl hydrolase 9 (cellulase E) family.

The protein localises to the secreted. The enzyme catalyses Endohydrolysis of (1-&gt;4)-beta-D-glucosidic linkages in cellulose, lichenin and cereal beta-D-glucans.. This Arabidopsis thaliana (Mouse-ear cress) protein is Endoglucanase 13.